We begin with the raw amino-acid sequence, 1053 residues long: 3-hydroxy-3-methylglutaryl-coenzyme A reductase (1053 aa).

Topologically, residues 1–8 are cytoplasmic; that stretch reads MIYKLAAR. The helical transmembrane segment at 9–29 threads the bilayer; it reads YPIQVIAIVGILVSMAYFSFL. At 30 to 203 the chain is on the lumenal side; the sequence is EALTQEDFPV…LKIASQASKT (174 aa). N-linked (GlcNAc...) asparagine glycosylation is present at N137. Residues 204–224 form a helical membrane-spanning segment; that stretch reads ELLIVGTAYACMLISIVSLYL. An SSD domain is found at 204-365; it reads ELLIVGTAYA…FSFFVAILTL (162 aa). Residues 225 to 232 are Cytoplasmic-facing; sequence KMRRLGSK. A helical transmembrane segment spans residues 233–253; it reads FWLFFSVLLSTLFSVQFAMTL. The Lumenal portion of the chain corresponds to 254-258; that stretch reads VRASG. Residues 259-279 traverse the membrane as a helical segment; it reads VRISLVSLIESLPFLINVVAL. Over 280–320 the chain is Cytoplasmic; the sequence is DKAAELTRQVITRCSVSDSHSPMHEDIAKACRNAAPPILRH. A run of 2 helical transmembrane segments spans residues 321–341 and 342–362; these read FSFG…IKQF and FLFA…FVAI. Topologically, residues 363–417 are cytoplasmic; sequence LTLKLEMRRYNAKDDVRKVLIEEGLSESTARHVADGNDSSATTSAGSRYFKVRYG. The chain crosses the membrane as a helical span at residues 418–438; the sequence is TKIILFIFIAFNLFELCSIPF. Residues 439-526 are Lumenal-facing; it reads KHYAATSAAA…NNWSHYISAS (88 aa). The N-linked (GlcNAc...) asparagine glycan is linked to N518. The chain crosses the membrane as a helical span at residues 527–547; it reads FLSKWIVCALSLSIAVNVFLL. Over 548 to 1053 the chain is Cytoplasmic; sequence NAARLNSIKE…KSVNSRVPGR (506 aa). E712 functions as the Charge relay system in the catalytic mechanism. 718–724 serves as a coordination point for CoA; the sequence is STMRGCK. NADP(+) contacts are provided by residues 779 to 781 and 806 to 814; these read SRF and DAMGMNMIS. K846 functions as the Charge relay system in the catalytic mechanism. 875 to 877 is a binding site for CoA; that stretch reads VLK. The active-site Charge relay system is D922. 1017–1018 serves as a coordination point for CoA; that stretch reads SH. The active-site Proton donor is the H1018. 1022–1023 is a binding site for NADP(+); the sequence is NR. Residue S1024 is modified to Phosphoserine. A Phosphothreonine modification is found at T1028. A disordered region spans residues 1028–1053; sequence TPAMDSSAKKPATDALKSVNSRVPGR.

Belongs to the HMG-CoA reductase family.

It is found in the endoplasmic reticulum membrane. The protein localises to the nucleus envelope. The catalysed reaction is (R)-mevalonate + 2 NADP(+) + CoA = (3S)-3-hydroxy-3-methylglutaryl-CoA + 2 NADPH + 2 H(+). It functions in the pathway metabolic intermediate biosynthesis; (R)-mevalonate biosynthesis; (R)-mevalonate from acetyl-CoA: step 3/3. In terms of biological role, part of the first module of ergosterol biosynthesis pathway that includes the early steps of the pathway, conserved across all eukaryotes, and which results in the formation of mevalonate from acetyl-coenzyme A (acetyl-CoA). Hmg1 catalyzes the reduction of hydroxymethylglutaryl-CoA (HMG-CoA) to mevalonate. The first module starts with the action of the cytosolic acetyl-CoA acetyltransferase eg10 that catalyzes the formation of acetoacetyl-CoA. The hydroxymethylglutaryl-CoA synthases erg13 then condenses acetyl-CoA with acetoacetyl-CoA to form HMG-CoA. The rate-limiting step of the early module is the reduction to mevalonate by the 3-hydroxy-3-methylglutaryl-coenzyme A (HMG-CoA) reductases hcs1. In Schizosaccharomyces pombe (strain 972 / ATCC 24843) (Fission yeast), this protein is 3-hydroxy-3-methylglutaryl-coenzyme A reductase.